Reading from the N-terminus, the 214-residue chain is Large ribosomal subunit protein uL3 (214 aa).

Gln-151 bears the N5-methylglutamine mark.

It belongs to the universal ribosomal protein uL3 family. In terms of assembly, part of the 50S ribosomal subunit. Forms a cluster with proteins L14 and L19. Methylated by PrmB.

In terms of biological role, one of the primary rRNA binding proteins, it binds directly near the 3'-end of the 23S rRNA, where it nucleates assembly of the 50S subunit. The polypeptide is Large ribosomal subunit protein uL3 (Saccharophagus degradans (strain 2-40 / ATCC 43961 / DSM 17024)).